Consider the following 148-residue polypeptide: Deoxyuridine 5'-triphosphate nucleotidohydrolase (148 aa).

Substrate is bound by residues 67–69 (RSG), Asn-80, 84–86 (LID), and Met-94.

This sequence belongs to the dUTPase family. The cofactor is Mg(2+).

The catalysed reaction is dUTP + H2O = dUMP + diphosphate + H(+). It participates in pyrimidine metabolism; dUMP biosynthesis; dUMP from dCTP (dUTP route): step 2/2. In terms of biological role, this enzyme is involved in nucleotide metabolism: it produces dUMP, the immediate precursor of thymidine nucleotides and it decreases the intracellular concentration of dUTP so that uracil cannot be incorporated into DNA. The protein is Deoxyuridine 5'-triphosphate nucleotidohydrolase of Burkholderia cenocepacia (strain ATCC BAA-245 / DSM 16553 / LMG 16656 / NCTC 13227 / J2315 / CF5610) (Burkholderia cepacia (strain J2315)).